We begin with the raw amino-acid sequence, 995 residues long: MPTHNSHSQPSSEDEGPPQSIIFGDHKLPEHPPTPNSPLQQTTNPFILESDGPHRQPHQSTIYSPGPFREPSTSRSPSHSRSRSTSPANSPGHSTISALASQSGVTASAGLGMTGADTAAASSKPTFREVPVPLSPTALSRQTSKSPAKSPRMGKGEGYLDPTILSVASGSRNSGKGKERTRRKGGHKYHSLHVQDEEEEEPPESDALRTRGKVGLNAYEKALWKWVNVDDLDGFLQEVYDYYKGKGIYCIVLARVLNLLTTFFVIAFSTFLISCIDYSKLFSSISTAEAVGRLEDVLVAQCITKGSFAHTLFLIILSAFFIFQVASFAMSVPRLLDMYRFYTHLLGVPDADIQTLPWPEIVRLIGDIRKHNPVTSLSNGQATALADMVGNDAKAPAKKLDAHDIANRILRQENYLIALFNKDLLDLRVRIPVPHVLTAFIPSSILISSADAPLPSLQSEPERKFLSFGANHLTKALEWNLRFCLLGYLFDRRGQVRKEFVREKRRKDLVQGLRRRFIFMGILNAIFAPFIILYLLIYSFFRYFEEYHKNPSSIGSRQYTPYAQWKFREFNELPHLFERRLDRSYEIAKEYVDQFPKERTALVMRFVAFIAGSFAAVLLVASLIDPDLFLHFEITPHRTVLFYLGVFGSILAISRGMVPQENMVFDPEASLNEVVRWTHYLPVEWRGQLHSQMVHQEFSKLFALKIMIFFSELLSVILTPFILFFSLPPCAAAIIDFFREFTVHVDGVGYVCSFAVFDFARYGNVDANQPETGLEGATGPDGGPAADGFAAGKPSRPTTRRTTSSSPSRLKHRDWRGNENKMEQSFLHFKATHPDWQPSDPSSSLFLDRLMGAGTRNRHGGGPVSAATGGISGSIYGGGGGGVGGRGLGVDGSVMAEMEEERLRAKRQSYERAWAKSSHLHRPDSSHSHPLRHPHSAASEIIEEEEGGEGDKGDDSIDGWSKRVKTDGETDDEEERERLWKDEGVVGLLQQVLGR.

A compositionally biased stretch (polar residues) spans 1-11 (MPTHNSHSQPS). Residues 1–208 (MPTHNSHSQP…EEEPPESDAL (208 aa)) form a disordered region. At 1–255 (MPTHNSHSQP…KGIYCIVLAR (255 aa)) the chain is on the cytoplasmic side. A compositionally biased stretch (low complexity) spans 69-91 (REPSTSRSPSHSRSRSTSPANSP). 2 stretches are compositionally biased toward polar residues: residues 92–106 (GHST…SGVT) and 137–147 (TALSRQTSKSP). The segment covering 179-191 (ERTRRKGGHKYHS) has biased composition (basic residues). The chain crosses the membrane as a helical span at residues 256 to 276 (VLNLLTTFFVIAFSTFLISCI). Residues 277–311 (DYSKLFSSISTAEAVGRLEDVLVAQCITKGSFAHT) lie on the Lumenal side of the membrane. The chain crosses the membrane as a helical span at residues 312–332 (LFLIILSAFFIFQVASFAMSV). At 333 to 516 (PRLLDMYRFY…KDLVQGLRRR (184 aa)) the chain is on the cytoplasmic side. The stretch at 517–537 (FIFMGILNAIFAPFIILYLLI) is an intramembrane region. The Cytoplasmic portion of the chain corresponds to 538–605 (YSFFRYFEEY…PKERTALVMR (68 aa)). A helical transmembrane segment spans residues 606–626 (FVAFIAGSFAAVLLVASLIDP). Residues 627 to 638 (DLFLHFEITPHR) are Lumenal-facing. The chain crosses the membrane as a helical span at residues 639–659 (TVLFYLGVFGSILAISRGMVP). Residues 660 to 705 (QENMVFDPEASLNEVVRWTHYLPVEWRGQLHSQMVHQEFSKLFALK) are Cytoplasmic-facing. The stretch at 706 to 726 (IMIFFSELLSVILTPFILFFS) is an intramembrane region. Over 727–995 (LPPCAAAIID…VGLLQQVLGR (269 aa)) the chain is Cytoplasmic. Disordered stretches follow at residues 771–817 (ETGL…DWRG) and 914–978 (WAKS…ERER). Positions 783–808 (GPAADGFAAGKPSRPTTRRTTSSSPS) are enriched in low complexity. Residues 949–968 (EGDKGDDSIDGWSKRVKTDG) show a composition bias toward basic and acidic residues.

This sequence belongs to the ATG9 family. As to quaternary structure, homotrimer; forms a homotrimer with a central pore that forms a path between the two membrane leaflets. In terms of processing, phosphorylated by ATG1. ATG1 phosphorylation is required for preautophagosome elongation.

It localises to the preautophagosomal structure membrane. It is found in the cytoplasmic vesicle membrane. Its subcellular location is the golgi apparatus membrane. The protein localises to the endoplasmic reticulum membrane. The catalysed reaction is a 1,2-diacyl-sn-glycero-3-phosphocholine(in) = a 1,2-diacyl-sn-glycero-3-phosphocholine(out). It carries out the reaction a 1,2-diacyl-sn-glycero-3-phospho-L-serine(in) = a 1,2-diacyl-sn-glycero-3-phospho-L-serine(out). The enzyme catalyses a 1,2-diacyl-sn-glycero-3-phosphoethanolamine(in) = a 1,2-diacyl-sn-glycero-3-phosphoethanolamine(out). It catalyses the reaction a 1,2-diacyl-sn-glycero-3-phospho-(1D-myo-inositol-3-phosphate)(in) = a 1,2-diacyl-sn-glycero-3-phospho-(1D-myo-inositol-3-phosphate)(out). Phospholipid scramblase involved in autophagy and cytoplasm to vacuole transport (Cvt) vesicle formation. Cycles between the preautophagosomal structure/phagophore assembly site (PAS) and the cytoplasmic vesicle pool and supplies membrane for the growing autophagosome. Lipid scramblase activity plays a key role in preautophagosomal structure/phagophore assembly by distributing the phospholipids that arrive through ATG2 from the cytoplasmic to the luminal leaflet of the bilayer, thereby driving autophagosomal membrane expansion. Required for mitophagy. Also involved in endoplasmic reticulum-specific autophagic process and is essential for the survival of cells subjected to severe ER stress. Different machineries are required for anterograde trafficking to the PAS during either the Cvt pathway or bulk autophagy and for retrograde trafficking. The polypeptide is Autophagy-related protein 9 (ATG9) (Cryptococcus neoformans var. neoformans serotype D (strain JEC21 / ATCC MYA-565) (Filobasidiella neoformans)).